Consider the following 88-residue polypeptide: Small ribosomal subunit protein uS15c (88 aa).

It belongs to the universal ribosomal protein uS15 family. In terms of assembly, part of the 30S ribosomal subunit.

The protein localises to the plastid. The protein resides in the chloroplast. The chain is Small ribosomal subunit protein uS15c (rps15) from Arabis hirsuta (Hairy rock-cress).